A 550-amino-acid polypeptide reads, in one-letter code: Carboxypeptidase Y homolog A (550 aa).

Residues 1-17 (MRVLSATLLAGAASAAA) form the signal peptide. Residues 18-131 (PPFQQVLGAH…RLEAYNLRAK (114 aa)) constitute a propeptide that is removed on maturation. Disulfide bonds link cysteine 186-cysteine 426, cysteine 320-cysteine 334, cysteine 344-cysteine 367, cysteine 351-cysteine 360, and cysteine 389-cysteine 396. Residue asparagine 217 is glycosylated (N-linked (GlcNAc...) asparagine). Residue serine 273 is part of the active site. Aspartate 465 is a catalytic residue. The N-linked (GlcNAc...) asparagine glycan is linked to asparagine 516. Histidine 527 is a catalytic residue.

Belongs to the peptidase S10 family.

The protein resides in the vacuole. The enzyme catalyses Release of a C-terminal amino acid with broad specificity.. Functionally, vacuolar carboxypeptidase involved in degradation of small peptides. Digests preferentially peptides containing an aliphatic or hydrophobic residue in P1' position, as well as methionine, leucine or phenylalanine in P1 position of ester substrate. The sequence is that of Carboxypeptidase Y homolog A (cpyA) from Penicillium rubens (strain ATCC 28089 / DSM 1075 / NRRL 1951 / Wisconsin 54-1255) (Penicillium chrysogenum).